A 393-amino-acid chain; its full sequence is S-adenosylmethionine synthase (393 aa).

Residue histidine 17 coordinates ATP. Aspartate 19 is a Mg(2+) binding site. Glutamate 45 lines the K(+) pocket. Residues glutamate 58 and glutamine 106 each contribute to the L-methionine site. Residues 106-116 (QSAHIAQGVDA) form a flexible loop region. ATP is bound by residues 171 to 173 (DAK), 237 to 238 (KF), aspartate 246, 252 to 253 (RK), alanine 269, and lysine 273. Aspartate 246 contacts L-methionine. Residue lysine 277 coordinates L-methionine.

It belongs to the AdoMet synthase family. In terms of assembly, homotetramer; dimer of dimers. Mg(2+) serves as cofactor. The cofactor is K(+).

The protein localises to the cytoplasm. It catalyses the reaction L-methionine + ATP + H2O = S-adenosyl-L-methionine + phosphate + diphosphate. It functions in the pathway amino-acid biosynthesis; S-adenosyl-L-methionine biosynthesis; S-adenosyl-L-methionine from L-methionine: step 1/1. In terms of biological role, catalyzes the formation of S-adenosylmethionine (AdoMet) from methionine and ATP. The overall synthetic reaction is composed of two sequential steps, AdoMet formation and the subsequent tripolyphosphate hydrolysis which occurs prior to release of AdoMet from the enzyme. The polypeptide is S-adenosylmethionine synthase (Jannaschia sp. (strain CCS1)).